We begin with the raw amino-acid sequence, 259 residues long: 3-oxo-5-alpha-steroid 4-dehydrogenase 1 (259 aa).

Transmembrane regions (helical) follow at residues 12–29, 86–106, 111–131, 151–171, and 209–229; these read LLAALAYLQCAVGCAVFA, ILLAMFLVHYGHRCLIYPFLM, PMPLLACTMAIMFCTCNGYLQ, FLIGFGLWLTGMLINIHSDHI, and YALASWSVQGAAFAFFTFCFL.

Belongs to the steroid 5-alpha reductase family. Liver and prostate (at a low level).

The protein resides in the microsome membrane. It is found in the endoplasmic reticulum membrane. It carries out the reaction a 3-oxo-5alpha-steroid + NADP(+) = a 3-oxo-Delta(4)-steroid + NADPH + H(+). The enzyme catalyses androst-4-ene-3,17-dione + NADPH + H(+) = 5alpha-androstan-3,17-dione + NADP(+). The catalysed reaction is 5alpha-pregnane-3,20-dione + NADP(+) = progesterone + NADPH + H(+). It catalyses the reaction 17beta-hydroxy-5alpha-androstan-3-one + NADP(+) = testosterone + NADPH + H(+). Converts testosterone into 5-alpha-dihydrotestosterone and progesterone or corticosterone into their corresponding 5-alpha-3-oxosteroids. It plays a central role in sexual differentiation and androgen physiology. This Homo sapiens (Human) protein is 3-oxo-5-alpha-steroid 4-dehydrogenase 1.